A 465-amino-acid polypeptide reads, in one-letter code: GTPase Der (465 aa).

EngA-type G domains are found at residues 3 to 167 and 179 to 352; these read PLVA…PERG and IHIA…VSAL. Residues 9–16, 57–61, 119–122, 185–192, 232–236, and 297–300 each bind GTP; these read GRPNVGKS, DTGGM, NKID, DTAGL, and NKWD. The KH-like domain occupies 353–437; that stretch reads RQFSTSEVNK…PVRFLFREGD (85 aa).

Belongs to the TRAFAC class TrmE-Era-EngA-EngB-Septin-like GTPase superfamily. EngA (Der) GTPase family. In terms of assembly, associates with the 50S ribosomal subunit.

In terms of biological role, GTPase that plays an essential role in the late steps of ribosome biogenesis. This chain is GTPase Der, found in Xylella fastidiosa (strain 9a5c).